A 281-amino-acid chain; its full sequence is Transcription factor E2F6 (281 aa).

A Glycyl lysine isopeptide (Lys-Gly) (interchain with G-Cter in SUMO2) cross-link involves residue K9. A DNA-binding region spans residues 50–129 (YVSMRKALKV…SKNHIRWIGS (80 aa)). Positions 95–129 (KLGVRKRRVYDITNVLDGIDLVEKKSKNHIRWIGS) match the DEF box motif. The interval 130–222 (DLSNFGAVPQ…PAPREDSITV (93 aa)) is dimerization. Residues 143-164 (LQEELSDLSAMEDALDELIKDC) form a leucine-zipper region. The transcription repression stretch occupies residues 173–281 (DDKENERLAY…QSEELLEVSN (109 aa)). Residues 241-281 (GQTSNKRSEGVGTSSSESTHPEGPEEEENPQQSEELLEVSN) form a disordered region.

This sequence belongs to the E2F/DP family. Forms heterodimers with DP family members TFDP1 or TFDP2. Component of the DRTF1/E2F transcription factor complex. Part of the E2F6.com-1 complex in G0 phase composed of E2F6, MGA, MAX, TFDP1, CBX3, BAT8, EUHMTASE1, RING1, RNF2, MBLR, L3MBTL2 and YAF2. Component of some MLL1/MLL complex, at least composed of the core components KMT2A/MLL1, ASH2L, HCFC1/HCF1, WDR5 and RBBP5, as well as the facultative components BACC1, CHD8, E2F6, HSP70, INO80C, KANSL1, LAS1L, MAX, MCRS1, MGA, KAT8/MOF, PELP1, PHF20, PRP31, RING2, RUVB1/TIP49A, RUVB2/TIP49B, SENP3, TAF1, TAF4, TAF6, TAF7, TAF9 and TEX10. As to expression, expressed in all tissues examined. Highest levels in placenta, skeletal muscle, heart, ovary, kidney, small intestine and spleen.

The protein resides in the nucleus. Inhibitor of E2F-dependent transcription. Binds DNA cooperatively with DP proteins through the E2 recognition site, 5'-TTTC[CG]CGC-3'. Has a preference for the 5'-TTTCCCGC-3' E2F recognition site. E2F6 lacks the transcriptional activation and pocket protein binding domains. Appears to regulate a subset of E2F-dependent genes whose products are required for entry into the cell cycle but not for normal cell cycle progression. Represses expression of some meiosis-specific genes, including SLC25A31/ANT4. May silence expression via the recruitment of a chromatin remodeling complex containing histone H3-K9 methyltransferase activity. Overexpression delays the exit of cells from the S-phase. The sequence is that of Transcription factor E2F6 from Homo sapiens (Human).